The sequence spans 357 residues: Putative minor fimbrial subunit PmfE (357 aa).

Positions 1–28 are cleaved as a signal peptide; the sequence is MILNKKNIHSKSVMLFCAGIVSLMPLHA.

The protein resides in the fimbrium. The polypeptide is Putative minor fimbrial subunit PmfE (pmfE) (Proteus mirabilis (strain HI4320)).